Consider the following 162-residue polypeptide: uncharacterized protein (162 aa).

Residues 7-27 (LGGVMLFAIVSLMVCGCMVVF) traverse the membrane as a helical segment.

The protein localises to the membrane. This is an uncharacterized protein from Methanocaldococcus jannaschii (strain ATCC 43067 / DSM 2661 / JAL-1 / JCM 10045 / NBRC 100440) (Methanococcus jannaschii).